We begin with the raw amino-acid sequence, 133 residues long: Nucleoside diphosphate kinase (133 aa).

ATP-binding residues include Lys9, Phe57, Arg85, Thr91, Arg102, and Asn112. His115 functions as the Pros-phosphohistidine intermediate in the catalytic mechanism.

Belongs to the NDK family. As to quaternary structure, homotetramer. Requires Mg(2+) as cofactor.

Its subcellular location is the cytoplasm. The catalysed reaction is a 2'-deoxyribonucleoside 5'-diphosphate + ATP = a 2'-deoxyribonucleoside 5'-triphosphate + ADP. It carries out the reaction a ribonucleoside 5'-diphosphate + ATP = a ribonucleoside 5'-triphosphate + ADP. Its function is as follows. Major role in the synthesis of nucleoside triphosphates other than ATP. The ATP gamma phosphate is transferred to the NDP beta phosphate via a ping-pong mechanism, using a phosphorylated active-site intermediate. This is Nucleoside diphosphate kinase from Rubrobacter xylanophilus (strain DSM 9941 / JCM 11954 / NBRC 16129 / PRD-1).